The sequence spans 155 residues: Transcriptional repressor NrdR (155 aa).

A zinc finger lies at 3–34; it reads CPFCSHFESKVVDSRPTDEGQAIRRRRECVSC. Positions 49–139 constitute an ATP-cone domain; the sequence is LIVVKKSGNR…VYREFKDINT (91 aa).

It belongs to the NrdR family. Requires Zn(2+) as cofactor.

In terms of biological role, negatively regulates transcription of bacterial ribonucleotide reductase nrd genes and operons by binding to NrdR-boxes. The protein is Transcriptional repressor NrdR of Alkaliphilus metalliredigens (strain QYMF).